Consider the following 355-residue polypeptide: BAG family molecular chaperone regulator 1 (355 aa).

Residues 1–112 (MAGRSAARRP…KNVTGTQVEE (112 aa)) are disordered. A compositionally biased stretch (basic and acidic residues) spans 26-39 (PAREPRQSESRAER). Composition is skewed to polar residues over residues 80-91 (SSQSEKVGSSSR) and 102-111 (SKNVTGTQVE). 7 consecutive repeat copies span residues 103–108 (KNVTGT), 111–116 (EEVTKI), 117–122 (EEATQT), 123–128 (EEVTVA), 129–134 (EEVTQT), 141–146 (EEMVQT), and 147–152 (EEMETP). Residues 111–209 (EEVTKIEEAT…LIFKGKSLKE (99 aa)) form a 7 X 6 AA tandem repeat of E-E-X(4) region. Residues 132 to 151 (TQTDNMAKTEEMVQTEEMET) are disordered. Residues 154 to 234 (LSVIVTHSNE…VMLIGEKSNP (81 aa)) form the Ubiquitin-like domain. Residues 182–229 (DLAQLVEEATGVPLPFQKLIFKGKSLKEMETPLSALGMQNGCRVMLIG) are interaction with HSPA8. The tract at residues 226 to 355 (MLIGEKSNPE…LQSTNLALAE (130 aa)) is interaction with PPP1R15A. The BAG domain maps to 256–336 (HLQELNKELS…VFLAECDTVE (81 aa)).

As to quaternary structure, homodimer. Forms a heteromeric complex with HSP70/HSC70. Binds to the ATPase domain of HSP/HSC70 chaperones. Interacts with NR3C1. Interacts with the N-terminal region of MAPRE2. Interacts with PPP1R15A. Interacts with BCL2 in an ATP-dependent manner. Interacts with SIAH1, HSPA8 (via NBD), HSPA1A (via NBD) and HSPA1B (via NBD). Interacts with SIAH2. Interacts with ESR1; the interaction is promoted in the absence of estradiol (17-beta-estradiol/E2). In terms of processing, ubiquitinated; mediated by SIAH1 or SIAH2 and leading to its subsequent proteasomal degradation. In terms of tissue distribution, isoform 2 is expressed in the heart, lung, kidney and spinal cord. Isoform 1 and isoform 2 are expressed in hematopoietic cell lines. The levels of isoform 2 are relatively constant in all the cell lines examined while the levels of isoform 1 are more variable (at protein level). Isoform 1 is expressed in the lung and kidney. Isoform 2 is expressed in various tissues, with highest levels in testis and stomach.

It is found in the nucleus. It localises to the cytoplasm. Its function is as follows. Co-chaperone for HSP70 and HSC70 chaperone proteins. Acts as a nucleotide-exchange factor (NEF) promoting the release of ADP from the HSP70 and HSC70 proteins thereby triggering client/substrate protein release. Nucleotide release is mediated via its binding to the nucleotide-binding domain (NBD) of HSPA8/HSC70 where as the substrate release is mediated via its binding to the substrate-binding domain (SBD) of HSPA8/HSC70. Inhibits the pro-apoptotic function of PPP1R15A, and has anti-apoptotic activity. Markedly increases the anti-cell death function of BCL2 induced by various stimuli. Involved in the STUB1-mediated proteasomal degradation of ESR1 in response to age-related circulating estradiol (17-beta-estradiol/E2) decline, thereby promotes neuronal apoptosis in response to ischemic reperfusion injury. The chain is BAG family molecular chaperone regulator 1 (Bag1) from Mus musculus (Mouse).